The primary structure comprises 80 residues: Cell division protein ZapB (80 aa).

The stretch at leucine 3–glutamate 80 forms a coiled coil. A disordered region spans residues leucine 41–aspartate 60. Over residues serine 49–aspartate 60 the composition is skewed to basic and acidic residues.

The protein belongs to the ZapB family. In terms of assembly, homodimer. The ends of the coiled-coil dimer bind to each other, forming polymers. Interacts with FtsZ.

The protein localises to the cytoplasm. Non-essential, abundant cell division factor that is required for proper Z-ring formation. It is recruited early to the divisome by direct interaction with FtsZ, stimulating Z-ring assembly and thereby promoting cell division earlier in the cell cycle. Its recruitment to the Z-ring requires functional FtsA or ZipA. The polypeptide is Cell division protein ZapB (Aliivibrio fischeri (strain ATCC 700601 / ES114) (Vibrio fischeri)).